We begin with the raw amino-acid sequence, 84 residues long: Dolichol phosphate-mannose biosynthesis regulatory protein (84 aa).

2 helical membrane-spanning segments follow: residues 11 to 31 and 49 to 69; these read FGLV…VILL and YAVL…GLFI.

This sequence belongs to the DPM2 family. In terms of assembly, component of the dolichol-phosphate mannose (DPM) synthase complex composed of DPM1, DPM2 and DPM3; in the complex interacts directly with DPM3. Component of the glycosylphosphatidylinositol-N-acetylglucosaminyltransferase (GPI-GnT) complex composed at least by PIGA, PIGC, PIGH, PIGP, PIGQ, PIGY and DPM2. Interacts with PIGA, PIGC and PIGQ.

It localises to the endoplasmic reticulum membrane. The protein operates within protein modification; protein glycosylation. Its function is as follows. Regulates the biosynthesis of dolichol phosphate-mannose. Regulatory subunit of the dolichol-phosphate mannose (DPM) synthase complex; essential for the ER localization and stable expression of DPM1. Part of the glycosylphosphatidylinositol-N-acetylglucosaminyltransferase (GPI-GnT) complex that catalyzes the transfer of N-acetylglucosamine from UDP-N-acetylglucosamine to phosphatidylinositol and participates in the first step of GPI biosynthesis. May act by regulating the GPI-GNT complex. In Rattus norvegicus (Rat), this protein is Dolichol phosphate-mannose biosynthesis regulatory protein.